The primary structure comprises 627 residues: Plastin-3 (627 aa).

EF-hand domains lie at 8-43 (EELEELREAFGKVDLNGNGFICDHELHDLFKEANLP) and 48-83 (KVREIIQKLMEEGDKNKDNMISFDEFVSIFQELKSG). Ca(2+)-binding residues include D21, N23, N25, E32, D61, N63, D65, M67, and E72. Actin-binding stretches follow at residues 105-378 (TSEL…ALTK) and 379-624 (PENQ…GRGM). 4 Calponin-homology (CH) domains span residues 119-235 (EEER…KIGL), 263-374 (LSPE…NKYP), 393-503 (TREE…RRYT), and 515-624 (KVND…GRGM).

Its subcellular location is the cytoplasm. Functionally, actin-bundling protein. The sequence is that of Plastin-3 (pls3) from Danio rerio (Zebrafish).